The primary structure comprises 382 residues: Galactokinase (382 aa).

34-37 (EHTD) contributes to the substrate binding site. Residue 124–130 (GAGLSSS) coordinates ATP. Mg(2+) contacts are provided by S130 and E162. D174 (proton acceptor) is an active-site residue. Substrate is bound at residue Y223.

The protein belongs to the GHMP kinase family. GalK subfamily.

The protein resides in the cytoplasm. The enzyme catalyses alpha-D-galactose + ATP = alpha-D-galactose 1-phosphate + ADP + H(+). It participates in carbohydrate metabolism; galactose metabolism. Catalyzes the transfer of the gamma-phosphate of ATP to D-galactose to form alpha-D-galactose-1-phosphate (Gal-1-P). This is Galactokinase from Salmonella paratyphi C (strain RKS4594).